The primary structure comprises 144 residues: UPF0306 protein ESA_03544 (144 aa).

It belongs to the UPF0306 family.

The protein is UPF0306 protein ESA_03544 of Cronobacter sakazakii (strain ATCC BAA-894) (Enterobacter sakazakii).